Consider the following 462-residue polypeptide: Cysteine--tRNA ligase (462 aa).

C30 is a binding site for Zn(2+). The 'HIGH' region motif lies at 32 to 42 (MTVYDYCHIGH). Zn(2+)-binding residues include C214, H239, and E243. The 'KMSKS' region motif lies at 271 to 275 (KMSKS). K274 is an ATP binding site.

Belongs to the class-I aminoacyl-tRNA synthetase family. In terms of assembly, monomer. Zn(2+) serves as cofactor.

The protein resides in the cytoplasm. The catalysed reaction is tRNA(Cys) + L-cysteine + ATP = L-cysteinyl-tRNA(Cys) + AMP + diphosphate. This Herminiimonas arsenicoxydans protein is Cysteine--tRNA ligase.